Here is a 737-residue protein sequence, read N- to C-terminus: Pentatricopeptide repeat-containing protein At3g49740 (737 aa).

PPR repeat units lie at residues 20–55, 56–90, 91–121, 122–152, 154–188, 189–222, 223–253, 256–289, 290–321, 322–352, 353–387, 388–418, 420–454, 455–485, 488–522, 523–553, 554–588, 590–620, and 626–656; these read TLLNLNRRLTGLTRSGENRNALKLFADVHRCTTLRP, DQYSVSLAITTARHLRDTIFGGQVHCYAIRSGLLC, HSHVSNTLLSLYERLGNLASLKKKFDEIDEP, DVYSWTTLLSASFKLGDIEYAFEVFDKMPER, DVAIWNAMITGCKESGYHETSVELFREMHKLGVRH, DKFGFATILSMCDYGSLDFGKQVHSLVIKAGFFI, ASSVVNALITMYFNCQVVVDACLVFEETDVA, DQVTFNVVIDGLAGFKRDESLLVFRKMLEASLRP, TDLTFVSVMGSCSCAAMGHQVHGLAIKTGYEK, YTLVSNATMTMYSSFEDFGAAHKVFESLEEK, DLVTWNTMISSYNQAKLGKSAMSVYKRMHIIGVKP, DEFTFGSLLATSLDLDVLEMVQACIIKFGLS, KIEISNALISAYSKNGQIEKADLLFERSLRKNLIS, WNAIISGFYHNGFPFEGLERFSCLLESEVRI, DAYTLSTLLSICVSTSSLMLGSQTHAYVLRHGQFK, ETLIGNALINMYSQCGTIQNSLEVFNQMSEK, DVVSWNSLISAYSRHGEGENAVNTYKTMQDEGKVI, DAATFSAVLSACSHAGLVEEGLEIFNSMVEF, and NVDHFSCLVDLLGRAGHLDEAESLVKISEKT. The interval 663-737 is type E motif; degenerate; it reads VWWALFSACA…KQRGCSWMRL (75 aa).

It belongs to the PPR family. PCMP-E subfamily.

This Arabidopsis thaliana (Mouse-ear cress) protein is Pentatricopeptide repeat-containing protein At3g49740 (PCMP-E84).